The following is a 1251-amino-acid chain: Topoisomerase 1-associated factor 1 (1251 aa).

Disordered regions lie at residues 328-354 (ERKMDSNKSFKPPRRARKEDMEPKDLG), 564-601 (RRKKKAAKAAGDQGDDEGQGDAEDDSADDERQAEKTSQ), 901-1021 (RRKT…YEGN), and 1041-1251 (ATFG…SDEE). Positions 344–354 (RKEDMEPKDLG) are enriched in basic and acidic residues. A compositionally biased stretch (acidic residues) spans 576-591 (QGDDEGQGDAEDDSAD). 2 stretches are compositionally biased toward basic and acidic residues: residues 592-601 (DERQAEKTSQ) and 985-1011 (AEARARARRKKELEKARKIKSEMYVDP). Composition is skewed to acidic residues over residues 1069–1079 (DGDDGEGEDAV) and 1103–1122 (GGEDSEEGDEDDESRSEEDG). Positions 1123-1136 (SAVSEAEAPAAAGR) are enriched in low complexity. Basic residues predominate over residues 1137-1151 (RPNKRRKPAQKKKKR). Over residues 1157-1179 (SGEDDDVGMDMDVDVDADADADA) the composition is skewed to acidic residues. Residues 1182 to 1205 (FTQSSKDGAVTNDTPLSSDPSRTT) show a composition bias toward polar residues.

It belongs to the timeless family. In terms of assembly, component of the fork protection complex (FPC) consisting of TOF1 and CSM3.

It localises to the nucleus. Functionally, forms a fork protection complex (FPC) with CSM3 and which is required for chromosome segregation during meiosis and DNA damage repair. FPC coordinates leading and lagging strand synthesis and moves with the replication fork. FPC stabilizes replication forks in a configuration that is recognized by replication checkpoint sensors. In Chaetomium globosum (strain ATCC 6205 / CBS 148.51 / DSM 1962 / NBRC 6347 / NRRL 1970) (Soil fungus), this protein is Topoisomerase 1-associated factor 1 (TOF1).